Consider the following 427-residue polypeptide: Glutamate-1-semialdehyde 2,1-aminomutase (427 aa).

Position 267 is an N6-(pyridoxal phosphate)lysine (Lys-267).

Belongs to the class-III pyridoxal-phosphate-dependent aminotransferase family. HemL subfamily. Homodimer. Requires pyridoxal 5'-phosphate as cofactor.

The protein localises to the cytoplasm. It carries out the reaction (S)-4-amino-5-oxopentanoate = 5-aminolevulinate. The protein operates within porphyrin-containing compound metabolism; protoporphyrin-IX biosynthesis; 5-aminolevulinate from L-glutamyl-tRNA(Glu): step 2/2. The sequence is that of Glutamate-1-semialdehyde 2,1-aminomutase from Geobacter sulfurreducens (strain ATCC 51573 / DSM 12127 / PCA).